The chain runs to 338 residues: Large ribosomal subunit protein uL3 (338 aa).

2 disordered regions span residues 230–256 (HRKGHRRTGTIGPQAPALMFTQPRPGQ) and 315–338 (PARPPRRAPPTTEPQVVWVSSQQP).

It belongs to the universal ribosomal protein uL3 family. In terms of assembly, part of the 50S ribosomal subunit. Forms a cluster with proteins L14 and L24e.

One of the primary rRNA binding proteins, it binds directly near the 3'-end of the 23S rRNA, where it nucleates assembly of the 50S subunit. This Pyrobaculum arsenaticum (strain DSM 13514 / JCM 11321 / PZ6) protein is Large ribosomal subunit protein uL3.